The sequence spans 657 residues: Acetyl-coenzyme A synthetase (657 aa).

Residues 192 to 195 and Thr-311 each bind CoA; that span reads RRGK. ATP is bound by residues 387–389, 411–416, Asp-504, Arg-519, and Arg-530; these read GEP and DTWWQT. Mg(2+) contacts are provided by His-543 and Val-546. CoA is bound at residue Arg-592. Lys-617 is modified (N6-acetyllysine).

It belongs to the ATP-dependent AMP-binding enzyme family. Requires Mg(2+) as cofactor. In terms of processing, acetylated. Deacetylation by the SIR2-homolog deacetylase activates the enzyme.

It catalyses the reaction acetate + ATP + CoA = acetyl-CoA + AMP + diphosphate. In terms of biological role, catalyzes the conversion of acetate into acetyl-CoA (AcCoA), an essential intermediate at the junction of anabolic and catabolic pathways. AcsA undergoes a two-step reaction. In the first half reaction, AcsA combines acetate with ATP to form acetyl-adenylate (AcAMP) intermediate. In the second half reaction, it can then transfer the acetyl group from AcAMP to the sulfhydryl group of CoA, forming the product AcCoA. The chain is Acetyl-coenzyme A synthetase from Campylobacter jejuni subsp. jejuni serotype O:2 (strain ATCC 700819 / NCTC 11168).